A 590-amino-acid polypeptide reads, in one-letter code: MDQPEDTDALVRFENITYSYPYSDSRVLSDVNLKLEKGEFVLLAGPSGCGKSTLVRCFNRLVPEISGGKLSGRVIIRGKDLREEKVHKLALEVGMVFQNPETQLFSLKVEDDLAFGPENLGLPGKEILSRVEKSLKAIKLEKLKDHFIFTLSGGEKQRTAIGGNLAMEPEILVLDEPTSDLDPSGTREVLDLLRRLNAEKRITLILIEHKLDEVFELADRMLVMDEGKVILDGKPFDILCREEGKLKKLGIHPPQIIEISRLLGFNCRTSSPPYENILKRLAELLMPSTRELQPESRKEAKPKIPPALCPEESLSHVRIEKLSCRREDGSETLKNVNLDIKYGEFLALLGHNGAGKTTLAGHLMRFHKPSSGRILLNGKNISKYSTAQLSQQIGYLFQNPDSQIFMNSVFEEVRFGLKNLKIPEEEMKKRVNSALEMMELSVYRNRHPQALSRGQRQRLAVASILALEPDLLVLDEPTTGQDRGHIHKFLDKIRELNRLGKTVILISHDMELVAEYAERVIVMKQGEVLLDGPAAEVFLSPEELDAAGLIPPLPARLALDLRKQGFDVPGMLTVSELKSFLRAHNVEIRD.

2 ABC transporter domains span residues 11–251 (VRFE…KLGI) and 317–550 (VRIE…AGLI). Residues 45–52 (GPSGCGKS) and 350–357 (GHNGAGKT) contribute to the ATP site.

This sequence belongs to the ABC transporter superfamily.

The protein localises to the cell membrane. Probably part of an ABC transporter complex. Responsible for energy coupling to the transport system. This Methanosarcina mazei (strain ATCC BAA-159 / DSM 3647 / Goe1 / Go1 / JCM 11833 / OCM 88) (Methanosarcina frisia) protein is Putative ABC transporter ATP-binding protein MM_3016.